Reading from the N-terminus, the 429-residue chain is Chaperone SurA (429 aa).

Residues 1 to 18 (MFKRIALVCALFSGICFA) form the signal peptide. 2 PpiC domains span residues 170–271 (NLTY…KLVA) and 281–380 (ITQT…EVIA).

The protein resides in the periplasm. The enzyme catalyses [protein]-peptidylproline (omega=180) = [protein]-peptidylproline (omega=0). Its function is as follows. Chaperone involved in the correct folding and assembly of outer membrane proteins. Recognizes specific patterns of aromatic residues and the orientation of their side chains, which are found more frequently in integral outer membrane proteins. May act in both early periplasmic and late outer membrane-associated steps of protein maturation. This is Chaperone SurA from Legionella pneumophila (strain Paris).